The following is a 180-amino-acid chain: ATP synthase subunit delta (180 aa).

Belongs to the ATPase delta chain family. F-type ATPases have 2 components, F(1) - the catalytic core - and F(0) - the membrane proton channel. F(1) has five subunits: alpha(3), beta(3), gamma(1), delta(1), epsilon(1). F(0) has three main subunits: a(1), b(2) and c(10-14). The alpha and beta chains form an alternating ring which encloses part of the gamma chain. F(1) is attached to F(0) by a central stalk formed by the gamma and epsilon chains, while a peripheral stalk is formed by the delta and b chains.

The protein resides in the cell membrane. Functionally, f(1)F(0) ATP synthase produces ATP from ADP in the presence of a proton or sodium gradient. F-type ATPases consist of two structural domains, F(1) containing the extramembraneous catalytic core and F(0) containing the membrane proton channel, linked together by a central stalk and a peripheral stalk. During catalysis, ATP synthesis in the catalytic domain of F(1) is coupled via a rotary mechanism of the central stalk subunits to proton translocation. Its function is as follows. This protein is part of the stalk that links CF(0) to CF(1). It either transmits conformational changes from CF(0) to CF(1) or is implicated in proton conduction. This is ATP synthase subunit delta from Ligilactobacillus salivarius (strain UCC118) (Lactobacillus salivarius).